Here is a 777-residue protein sequence, read N- to C-terminus: Intraflagellar transport protein 80 homolog (777 aa).

WD repeat units lie at residues 12-50, 104-143, 145-185, 186-225, 227-265, 267-306, and 504-542; these read KHQE…TSLI, AHCG…RSTL, QQGI…LQWK, AHDG…LYGS, PHEH…YALE, PNTG…WEWK, and KLGT…YVDR. A disordered region spans residues 758 to 777; sequence TKERDRSSSGQSSKNTGLKP. Residues 765 to 777 are compositionally biased toward polar residues; it reads SSGQSSKNTGLKP.

In terms of assembly, component of the IFT complex B, at least composed of IFT20, IFT22, IFT25, IFT27, IFT46, IFT52, TRAF3IP1/IFT54, IFT57, IFT74, IFT80, IFT81, and IFT88. Interacts with IFT88. Interacts with IFT57 and IFT70B.

The protein resides in the cytoplasm. It is found in the cytoskeleton. It localises to the cilium basal body. The protein localises to the cilium axoneme. Functionally, component of the intraflagellar transport (IFT) complex B, which is essential for the development and maintenance of motile and sensory cilia. The polypeptide is Intraflagellar transport protein 80 homolog (Ift80) (Rattus norvegicus (Rat)).